The following is a 159-amino-acid chain: NAD(P)H-quinone oxidoreductase subunit J, chloroplastic (159 aa).

It belongs to the complex I 30 kDa subunit family. NDH is composed of at least 16 different subunits, 5 of which are encoded in the nucleus.

Its subcellular location is the plastid. The protein resides in the chloroplast thylakoid membrane. The enzyme catalyses a plastoquinone + NADH + (n+1) H(+)(in) = a plastoquinol + NAD(+) + n H(+)(out). The catalysed reaction is a plastoquinone + NADPH + (n+1) H(+)(in) = a plastoquinol + NADP(+) + n H(+)(out). In terms of biological role, NDH shuttles electrons from NAD(P)H:plastoquinone, via FMN and iron-sulfur (Fe-S) centers, to quinones in the photosynthetic chain and possibly in a chloroplast respiratory chain. The immediate electron acceptor for the enzyme in this species is believed to be plastoquinone. Couples the redox reaction to proton translocation, and thus conserves the redox energy in a proton gradient. The polypeptide is NAD(P)H-quinone oxidoreductase subunit J, chloroplastic (Brachypodium distachyon (Purple false brome)).